A 926-amino-acid polypeptide reads, in one-letter code: Neurofilament medium polypeptide (926 aa).

A compositionally biased stretch (polar residues) spans 1–10 (MSYTLDSLGN). Disordered stretches follow at residues 1-51 (MSYT…VSSS) and 79-102 (QSSS…SNEK). S2 is modified (N-acetylserine). The head stretch occupies residues 2–104 (SYTLDSLGNP…KLSRSNEKEQ (103 aa)). Residues 21–44 (RSSFSRISGSPSSGFRSQSWSRGS) are compositionally biased toward low complexity. S30 bears the Phosphoserine mark. Residue R42 is modified to Omega-N-methylarginine. O-linked (GlcNAc) threonine glycosylation is present at T47. S99 carries the phosphoserine modification. Residues 101–412 (EKEQIQGLND…KLLEGEETRF (312 aa)) form the IF rod domain. The interval 105 to 136 (IQGLNDRFAGYIEKVHYLEQQNKEIEAEIQAL) is coil 1A. A linker 1 region spans residues 137 to 149 (RQKQASHAQLGDA). The tract at residues 150 to 248 (YDQEIRELRA…EEEVADLLAQ (99 aa)) is coil 1B. S226 carries the post-translational modification Phosphoserine. A linker 12 region spans residues 249-265 (IQASHITVERKDYLKTD). Residues 266–287 (ISTALKEIRSQLESHSDQNMHQ) are coil 2A. A linker 2 region spans residues 288–291 (AEEW). A coil 2B region spans residues 292–412 (FKCRYAKLTE…KLLEGEETRF (121 aa)). Y320 carries the phosphotyrosine modification. A phosphoserine mark is found at S346, S418, S430, S468, and S484. Residues 413-926 (STFAGSITGP…AIVKEVTQSD (514 aa)) are tail. The interval 487-860 (EEVKEEEAEE…EKKGGDKSEE (374 aa)) is disordered. Residues 490–507 (KEEEAEEKEEKEEAEEEV) show a composition bias toward acidic residues. Copy 1 of the repeat occupies 512 to 516 (KSPVK). Residues 512 to 698 (KSPVKATAPE…KSPAPKSPVE (187 aa)) form a 17 X 5 AA approximate tandem repeats of K-S-P-[TVEA]-[AKETP] region. S513 carries the post-translational modification Phosphoserine. A compositionally biased stretch (acidic residues) spans 523–543 (KEEEGEKEEEEGQEEEEEEEE). Residues 544-563 (AAKSDQAEEGGSEKEGSSEK) are compositionally biased toward basic and acidic residues. S547, S555, S560, and S561 each carry phosphoserine. A compositionally biased stretch (acidic residues) spans 564–584 (EEGEQEEEGETEAEGEGEEAA). T574 carries the phosphothreonine modification. Over residues 585 to 619 (AEAKEEKKMEEKAEEVAPKEELAAEAKVEKPEKAK) the composition is skewed to basic and acidic residues. 16 repeat units span residues 619–623 (KSPVA), 624–628 (KSPTT), 629–633 (KSPTA), 634–638 (KSPEA), 639–643 (KSPEA), 644–648 (KSPTA), 649–653 (KSPTA), 654–658 (KSPVA), 659–663 (KSPTA), 664–668 (KSPEA), 669–673 (KSPEA), 674–678 (KSPTA), 679–683 (KSPTA), 684–688 (KSPAA), 689–693 (KSPAP), and 694–698 (KSPVE). T628 carries the phosphothreonine modification. A phosphoserine mark is found at S630, S635, and S640. T647 carries the post-translational modification Phosphothreonine. Phosphoserine is present on residues S650 and S655. 2 positions are modified to phosphoserine: S665 and S670. Positions 673 to 692 (AKSPTAKSPTAKSPAAKSPA) are enriched in low complexity. A Phosphothreonine modification is found at T677. 10 positions are modified to phosphoserine: S680, S685, S690, S695, S727, S751, S757, S771, S831, and S847. Basic and acidic residues-rich tracts occupy residues 696-764 (PVEE…EEVP), 771-811 (SPEK…KEDI), and 826-838 (TKEK…EEKG). The segment covering 849 to 860 (GDEKKGGDKSEE) has biased composition (basic and acidic residues).

As to quaternary structure, forms heterodimers with NEFL; which can further hetero-oligomerize (in vitro). Forms heterodimers with INA (in vitro). Post-translationally, phosphorylated on a number of serine residues in the repeated K-S-P tripeptide motif. Phosphorylation of NFH may result in the formation of interfilament cross-links that are important in the maintenance of axonal caliber. In terms of processing, phosphorylation seems to play a major role in the functioning of the larger neurofilament polypeptides (NF-M and NF-H), the levels of phosphorylation being altered developmentally and coincidentally with a change in the neurofilament function. Phosphorylated in the head and rod regions by the PKC kinase PKN1, leading to the inhibition of polymerization.

The protein resides in the cytoplasm. Its subcellular location is the cytoskeleton. It is found in the cell projection. It localises to the axon. Functionally, neurofilaments usually contain three intermediate filament proteins: NEFL, NEFM, and NEFH which are involved in the maintenance of neuronal caliber. May additionally cooperate with the neuronal intermediate filament proteins PRPH and INA to form neuronal filamentous networks. This Bos taurus (Bovine) protein is Neurofilament medium polypeptide (NEFM).